Consider the following 265-residue polypeptide: Ribosomal RNA small subunit methyltransferase A (265 aa).

S-adenosyl-L-methionine is bound by residues His11, Leu13, Gly38, Glu59, Asp83, and Asn100.

It belongs to the class I-like SAM-binding methyltransferase superfamily. rRNA adenine N(6)-methyltransferase family. RsmA subfamily.

The protein localises to the cytoplasm. The enzyme catalyses adenosine(1518)/adenosine(1519) in 16S rRNA + 4 S-adenosyl-L-methionine = N(6)-dimethyladenosine(1518)/N(6)-dimethyladenosine(1519) in 16S rRNA + 4 S-adenosyl-L-homocysteine + 4 H(+). Specifically dimethylates two adjacent adenosines (A1518 and A1519) in the loop of a conserved hairpin near the 3'-end of 16S rRNA in the 30S particle. May play a critical role in biogenesis of 30S subunits. The protein is Ribosomal RNA small subunit methyltransferase A of Thermosynechococcus vestitus (strain NIES-2133 / IAM M-273 / BP-1).